A 368-amino-acid polypeptide reads, in one-letter code: tRNA N6-adenosine threonylcarbamoyltransferase (368 aa).

Positions 108 and 112 each coordinate Fe cation. Substrate contacts are provided by residues 149–153 (LVSGG), aspartate 183, glycine 196, aspartate 200, and asparagine 301. Aspartate 329 serves as a coordination point for Fe cation.

The protein belongs to the KAE1 / TsaD family. Fe(2+) is required as a cofactor.

It is found in the cytoplasm. The enzyme catalyses L-threonylcarbamoyladenylate + adenosine(37) in tRNA = N(6)-L-threonylcarbamoyladenosine(37) in tRNA + AMP + H(+). Functionally, required for the formation of a threonylcarbamoyl group on adenosine at position 37 (t(6)A37) in tRNAs that read codons beginning with adenine. Is involved in the transfer of the threonylcarbamoyl moiety of threonylcarbamoyl-AMP (TC-AMP) to the N6 group of A37, together with TsaE and TsaB. TsaD likely plays a direct catalytic role in this reaction. This Paenarthrobacter aurescens (strain TC1) protein is tRNA N6-adenosine threonylcarbamoyltransferase.